The sequence spans 512 residues: ATP synthase subunit alpha (512 aa).

Position 169 to 176 (169 to 176 (GDRQTGKT)) interacts with ATP.

This sequence belongs to the ATPase alpha/beta chains family. In terms of assembly, F-type ATPases have 2 components, CF(1) - the catalytic core - and CF(0) - the membrane proton channel. CF(1) has five subunits: alpha(3), beta(3), gamma(1), delta(1), epsilon(1). CF(0) has three main subunits: a(1), b(2) and c(9-12). The alpha and beta chains form an alternating ring which encloses part of the gamma chain. CF(1) is attached to CF(0) by a central stalk formed by the gamma and epsilon chains, while a peripheral stalk is formed by the delta and b chains.

It localises to the cell inner membrane. The enzyme catalyses ATP + H2O + 4 H(+)(in) = ADP + phosphate + 5 H(+)(out). Produces ATP from ADP in the presence of a proton gradient across the membrane. The alpha chain is a regulatory subunit. In Azoarcus sp. (strain BH72), this protein is ATP synthase subunit alpha.